An 846-amino-acid polypeptide reads, in one-letter code: cGMP-dependent protein kinase (846 aa).

The autoinhibitory segment stretch occupies residues 1–22 (MRCNERNKKKAIFSNDDFSGED). CNMP-binding domain regions lie at residues 51 to 166 (VCST…FIDS), 169 to 268 (VFDM…IVLG), 288 to 391 (IFRQ…LGDN), and 411 to 510 (IFRY…LQII). Lysine 106, glycine 115, glutamate 116, alanine 118, arginine 125, and serine 126 together coordinate 3',5'-cyclic GMP. 3',5'-cyclic GMP-binding residues include arginine 466, glycine 475, glutamate 476, alanine 478, arginine 485, and threonine 486. Residues 534 to 791 (LETERIIGRG…FKDIKEHAFF (258 aa)) form the Protein kinase domain. ATP contacts are provided by residues 540-548 (IGRGTFGTV) and lysine 563. Aspartate 657 acts as the Proton acceptor in catalysis. The AGC-kinase C-terminal domain maps to 792–846 (GNFNWDKLAGRLLEPPLVSKGETYAEDIDIKQIEEEDALNEGEPLDGDDSWDVDF). A disordered region spans residues 824 to 846 (IEEEDALNEGEPLDGDDSWDVDF). A compositionally biased stretch (acidic residues) spans 825–846 (EEEDALNEGEPLDGDDSWDVDF).

It belongs to the protein kinase superfamily. AGC Ser/Thr protein kinase family. cGMP subfamily. As to quaternary structure, monomer. The cofactor is Mg(2+). Autophosphorylated.

The protein resides in the cytoplasm. Its subcellular location is the endoplasmic reticulum membrane. The enzyme catalyses L-seryl-[protein] + ATP = O-phospho-L-seryl-[protein] + ADP + H(+). The catalysed reaction is L-threonyl-[protein] + ATP = O-phospho-L-threonyl-[protein] + ADP + H(+). Activated by cGMP. Not activated by cAMP. cGMP binding allosterically triggers a conformational change at the alpha C-helix of cGMP-binding domain 4, which bridges the regulatory and catalytic domains, causing the capping triad, composed of Arg-477, Gln-525 and Asp-526, to form and stabilize the active conformation. The cGMP-binding domains acts cooperatively to activate PKG. Serine/threonine protein kinase which acts as a downstream effector of the second messenger cGMP. Controls the release of Ca(2+) from intracellular stores by regulating phosphoinositide biosynthesis. Ca(2+) signals are essential for merozoite and sporozoite invasion and egress from host hepatocytes and erythrocytes, and, in the mosquito vector, for gametocyte activation, and ookinete and sporozoite motility. During the host liver stage, regulates the initial invasion of host hepatocytes by sporozoites by regulating sporozoite motility and microneme exocytosis. Following parasite development in the hepatocytes, required for the release of merosomes, a vesicle containing the mature merozoites. During the asexual blood stage, required for the progression from schizont to the ring stage following merozoite invasion of host erythrocytes and for merozoite egress. Regulates merozoite egress by promoting the release of exonemes and micronemes which contain proteins essential for egress. Phosphorylates CDPK1 predominantly at the late schizont stage; phosphorylation at 'Ser-64' regulates CDPK1 protein-protein interaction and phosphorylation at 'Thr-231' may regulate CDPK1 kinase activity. In the mosquito vector, required for the initiation of gametogenesis induced by xanthurenic acid, specifically the gametocyte differentiation from the crescent-shaped form to the spherical form. Required for the gliding motility of ookinetes to reach and penetrate the midgut epithelium by promoting Ca(2+)-mediated activation of CDPK1 and CDPK4. Also required for microneme secretion in ookinete by promoting Ca(2+)-mediated activation of CDPK3. This is cGMP-dependent protein kinase from Plasmodium vivax (strain Salvador I).